The chain runs to 95 residues: Large ribosomal subunit protein bL27 (95 aa).

The propeptide occupies 1–9 (MLKMNLQFF).

Belongs to the bacterial ribosomal protein bL27 family. Post-translationally, the N-terminus is cleaved by ribosomal processing cysteine protease Prp.

This is Large ribosomal subunit protein bL27 from Lachnoclostridium phytofermentans (strain ATCC 700394 / DSM 18823 / ISDg) (Clostridium phytofermentans).